Here is a 343-residue protein sequence, read N- to C-terminus: Ribosomal RNA small subunit methyltransferase C (343 aa).

The protein belongs to the methyltransferase superfamily. RsmC family. In terms of assembly, monomer.

The protein localises to the cytoplasm. The enzyme catalyses guanosine(1207) in 16S rRNA + S-adenosyl-L-methionine = N(2)-methylguanosine(1207) in 16S rRNA + S-adenosyl-L-homocysteine + H(+). Its function is as follows. Specifically methylates the guanine in position 1207 of 16S rRNA in the 30S particle. This chain is Ribosomal RNA small subunit methyltransferase C, found in Escherichia coli O6:K15:H31 (strain 536 / UPEC).